A 143-amino-acid polypeptide reads, in one-letter code: Snake venom vascular endothelial growth factor toxin (143 aa).

Residues 1–24 (MAVYLLAVAILFCIQGWPSGTVQG) form the signal peptide. Glu-25 is subject to Pyrrolidone carboxylic acid (Glu). 3 disulfide bridges follow: Cys-38–Cys-80, Cys-69–Cys-115, and Cys-73–Cys-117. Residues 117-143 (CRPRSPGDVNDGRNPKEGEPRARFPFV) are disordered.

This sequence belongs to the PDGF/VEGF growth factor family. Snake venom VEGF subfamily. Homodimer; disulfide-linked. Interacts with VEGF receptor-1 (FLT1) with a high affinity, whereas it binds to VEGF receptor-2 (KDR) with a low affinity. Does not bind to VEGFR-3/FLT4 and neuropilin-1 (NRP1). Expressed by the venom gland.

The protein resides in the secreted. In terms of biological role, snake venom VEGFs may contribute to venom dispersion and prey subjugation by inducing vascular permeability and hypotension. This protein activates the vascular endothelial growth factor receptor-1 (VEGFR-1/FLT1), and consequently promotes the proliferation and tissue factor production of endothelial cells, the neovascularization in the chicken chorioallantoic membrane, and increases vascular permeability. Also stimulates tissue-factor production and human monocyte chemotaxis. In Protobothrops mucrosquamatus (Taiwan habu), this protein is Snake venom vascular endothelial growth factor toxin.